The following is an 82-amino-acid chain: Neuropeptide-like peptide 36 (82 aa).

The protein is Neuropeptide-like peptide 36 (nlp-36) of Caenorhabditis elegans.